A 329-amino-acid chain; its full sequence is MILSQQKYNYLAKVSDSNGVISALAFDQRGALKCLMAQYQMKEPTVAQMEELKVLVSEELTPYASSILLDPEYGLPAAQARDREAGLLLAYEKTGYDANTTSRLPDCLVDWSIKRLKEAGADAVKFLLYYDVDGDPQVNVQKQAYIERIGSECQAEDIPFFLEILTYDETISNNSSVEFAKVKVHKVNDAMKVFSAERFGIDVLKVEVPVNMVYVEGFAEGEVVYSKEEAAQAFREQEASTDLPYIYLSAGVSAELFQETLVFAHKAGAKFNGVLCGRATWAGSVQVYMEEGKEAARQWLRTSGLQNINELNKVLKTTASPWTEKVSVG.

The protein belongs to the aldolase LacD family.

The enzyme catalyses D-tagatofuranose 1,6-bisphosphate = D-glyceraldehyde 3-phosphate + dihydroxyacetone phosphate. It functions in the pathway carbohydrate metabolism; D-tagatose 6-phosphate degradation; D-glyceraldehyde 3-phosphate and glycerone phosphate from D-tagatose 6-phosphate: step 2/2. The polypeptide is Tagatose 1,6-diphosphate aldolase 2 (lacD2) (Streptococcus mutans serotype c (strain ATCC 700610 / UA159)).